Here is a 250-residue protein sequence, read N- to C-terminus: Probable transcriptional regulatory protein Emin_1151 (250 aa).

The protein belongs to the TACO1 family.

Its subcellular location is the cytoplasm. The polypeptide is Probable transcriptional regulatory protein Emin_1151 (Elusimicrobium minutum (strain Pei191)).